Consider the following 89-residue polypeptide: uncharacterized protein (89 aa).

Position 1 (methionine 1) is a topological domain, cytoplasmic. A helical transmembrane segment spans residues 2–22 (LFEIIYIVSSLFYIVSIIYTL). Over 23–89 (MRIKHINTVA…ELKKSKLCEG (67 aa)) the chain is Extracellular.

The protein localises to the host membrane. This is an uncharacterized protein from Sulfolobus islandicus filamentous virus (isolate Iceland/Hveragerdi) (SIFV).